We begin with the raw amino-acid sequence, 307 residues long: Porphobilinogen deaminase (307 aa).

Position 239 is an S-(dipyrrolylmethanemethyl)cysteine (C239).

The protein belongs to the HMBS family. In terms of assembly, monomer. Dipyrromethane serves as cofactor.

The catalysed reaction is 4 porphobilinogen + H2O = hydroxymethylbilane + 4 NH4(+). Its pathway is porphyrin-containing compound metabolism; protoporphyrin-IX biosynthesis; coproporphyrinogen-III from 5-aminolevulinate: step 2/4. Tetrapolymerization of the monopyrrole PBG into the hydroxymethylbilane pre-uroporphyrinogen in several discrete steps. This Campylobacter jejuni subsp. jejuni serotype O:23/36 (strain 81-176) protein is Porphobilinogen deaminase.